The following is a 288-amino-acid chain: Acetyl-coenzyme A carboxylase carboxyl transferase subunit beta (288 aa).

The 265-residue stretch at 24–288 folds into the CoA carboxyltransferase N-terminal domain; that stretch reads LWVKCPESGE…TRTPRASEAA (265 aa).

Belongs to the AccD/PCCB family. As to quaternary structure, acetyl-CoA carboxylase is a heterohexamer composed of biotin carboxyl carrier protein (AccB), biotin carboxylase (AccC) and two subunits each of ACCase subunit alpha (AccA) and ACCase subunit beta (AccD).

It is found in the cytoplasm. It carries out the reaction N(6)-carboxybiotinyl-L-lysyl-[protein] + acetyl-CoA = N(6)-biotinyl-L-lysyl-[protein] + malonyl-CoA. It participates in lipid metabolism; malonyl-CoA biosynthesis; malonyl-CoA from acetyl-CoA: step 1/1. Its function is as follows. Component of the acetyl coenzyme A carboxylase (ACC) complex. Biotin carboxylase (BC) catalyzes the carboxylation of biotin on its carrier protein (BCCP) and then the CO(2) group is transferred by the transcarboxylase to acetyl-CoA to form malonyl-CoA. The chain is Acetyl-coenzyme A carboxylase carboxyl transferase subunit beta from Methylocella silvestris (strain DSM 15510 / CIP 108128 / LMG 27833 / NCIMB 13906 / BL2).